Reading from the N-terminus, the 547-residue chain is Calcium-dependent protein kinase 16 (547 aa).

The disordered stretch occupies residues 1–53; sequence MGNCCRSPAAAAREDVKTSHFPASTGGGKKKPHQARNGGGGGGGGGGGGWEKK. G2 carries the N-myristoyl glycine lipid modification. Residues 37-49 show a composition bias toward gly residues; the sequence is NGGGGGGGGGGGG. Positions 73-331 constitute a Protein kinase domain; it reads YALDRELGRG…AKQVLEHTWL (259 aa). ATP is bound by residues 79–87 and K102; that span reads LGRGEFGVT. The active-site Proton acceptor is D197. Residues 337-367 are autoinhibitory domain; it reads APNVPLGDIVKSRLKQFSRMNRFKRRALRVI. EF-hand domains are found at residues 374–409, 410–445, 446–481, and 482–517; these read EEVEDIKDMFKVMDTDNDGIVSYEELKSGIAKFGSH, LAESEVQMLIEAVDTNGRGALDYGEFLAVSLHLQRM, ANGEHLRRAFLFFDKDGNGYIEPEELQEALVEDGAT, and DIMEVVKDILQEVDTDKDGKISYEEFVAMMKTGTDW. Residues D387, D389, D391, E398, D423, N425, E434, D459, D461, N463, Y465, E470, D495, D497, D499, K501, and E506 each coordinate Ca(2+).

It belongs to the protein kinase superfamily. Ser/Thr protein kinase family. CDPK subfamily.

It is found in the membrane. It carries out the reaction L-seryl-[protein] + ATP = O-phospho-L-seryl-[protein] + ADP + H(+). The enzyme catalyses L-threonyl-[protein] + ATP = O-phospho-L-threonyl-[protein] + ADP + H(+). Its activity is regulated as follows. Activated by calcium. Autophosphorylation may play an important role in the regulation of the kinase activity. In terms of biological role, may play a role in signal transduction pathways that involve calcium as a second messenger. The chain is Calcium-dependent protein kinase 16 from Oryza sativa subsp. japonica (Rice).